Here is a 652-residue protein sequence, read N- to C-terminus: Zinc finger protein 432 (652 aa).

The KRAB domain occupies 8-79 (LTLEDVTVEF…EDERHSRICP (72 aa)). Residue tyrosine 41 is modified to 3'-nitrotyrosine. An ADP-ribosylserine mark is found at serine 139 and serine 164. 16 consecutive C2H2-type zinc fingers follow at residues 205–227 (HVCSECGKAFVKKSQLTDHERVH), 233–255 (YGCTLCAKVFSRKSRLNEHQRIH), 261–283 (FICSECGKVFTMKSRLIEHQRTH), 289–311 (YICNECGKGFPGKRNLIVHQRNH), 317–339 (YICSECGKGFTGKSMLIIHQRTH), 345–367 (YICSECGKGFTTKHYVIIHQRNH), 373–395 (YICNECGKGFTMKSRMIEHQRTH), 401–423 (YICSECGKGFPRKSNLIVHQRNH), 429–451 (YLCSECGKGFTVKSMLIIHQRTH), 457–479 (YTCSECGKGFPLKSRLIVHQRTH), 485–507 (YRCSECGKGFIVNSGLMLHQRTH), 513–535 (YICNECGKGFAFKSNLVVHQRTH), 541–563 (FMCSECGKGFTMKRYLIVHQQIH), 567–591 (KSCICSECGRGFAKETELALHKQVH), 597–619 (YGCNECGKGFTMKSRLIVHQRTH), and 625–647 (FVCSECRKAFSSKRNLIVHQRTH). Serine 246 carries the post-translational modification ADP-ribosylserine. Serine 330 carries the post-translational modification ADP-ribosylserine. An ADP-ribosylserine modification is found at serine 414.

This sequence belongs to the krueppel C2H2-type zinc-finger protein family. In terms of assembly, interacts with PARP1 and several chromatin remodeling proteins; the interaction with PARP1 reshapes ZNF432 interacting proteins. Interacts with TRIM28; the interaction is independent of PARP1.

It is found in the nucleus. Its function is as follows. Homologous recombination repressor that functions as a poly(ADP-ribose) (PAR) reader regulating DNA damage response and PARP inhibition. Once recruited to DNA lesions via DNA-, in a PAR-dependent mechanism, stimulates PARP1 activity. Binds preferentially ssDNA and inhibits EXO1-mediated resection, probably through a PAR-independent DNA-binding mechanism. This is Zinc finger protein 432 from Homo sapiens (Human).